A 498-amino-acid polypeptide reads, in one-letter code: Bifunctional protein GlmU (498 aa).

The interval 1–238 (MSDAAVVILA…PALVAGVNDR (238 aa)) is pyrophosphorylase. UDP-N-acetyl-alpha-D-glucosamine contacts are provided by residues 9-12 (LAAG), K23, Q80, and 85-86 (GT). Residue D111 coordinates Mg(2+). Positions 148, 163, 178, and 236 each coordinate UDP-N-acetyl-alpha-D-glucosamine. Residue N236 participates in Mg(2+) binding. Residues 239 to 259 (VQLADLGAELNRRVVAAHQRA) are linker. The N-acetyltransferase stretch occupies residues 260-498 (GVTIVDPATT…TAKPAPATGE (239 aa)). R341 and K359 together coordinate UDP-N-acetyl-alpha-D-glucosamine. H371 acts as the Proton acceptor in catalysis. Positions 374 and 385 each coordinate UDP-N-acetyl-alpha-D-glucosamine. Residues A388, 394 to 395 (NY), S413, and A431 contribute to the acetyl-CoA site. A disordered region spans residues 470–498 (AAEAAAADGDTAAADRAAATAKPAPATGE).

It in the N-terminal section; belongs to the N-acetylglucosamine-1-phosphate uridyltransferase family. The protein in the C-terminal section; belongs to the transferase hexapeptide repeat family. Homotrimer. Mg(2+) is required as a cofactor.

It localises to the cytoplasm. It carries out the reaction alpha-D-glucosamine 1-phosphate + acetyl-CoA = N-acetyl-alpha-D-glucosamine 1-phosphate + CoA + H(+). The enzyme catalyses N-acetyl-alpha-D-glucosamine 1-phosphate + UTP + H(+) = UDP-N-acetyl-alpha-D-glucosamine + diphosphate. The protein operates within nucleotide-sugar biosynthesis; UDP-N-acetyl-alpha-D-glucosamine biosynthesis; N-acetyl-alpha-D-glucosamine 1-phosphate from alpha-D-glucosamine 6-phosphate (route II): step 2/2. It participates in nucleotide-sugar biosynthesis; UDP-N-acetyl-alpha-D-glucosamine biosynthesis; UDP-N-acetyl-alpha-D-glucosamine from N-acetyl-alpha-D-glucosamine 1-phosphate: step 1/1. It functions in the pathway bacterial outer membrane biogenesis; LPS lipid A biosynthesis. Its function is as follows. Catalyzes the last two sequential reactions in the de novo biosynthetic pathway for UDP-N-acetylglucosamine (UDP-GlcNAc). The C-terminal domain catalyzes the transfer of acetyl group from acetyl coenzyme A to glucosamine-1-phosphate (GlcN-1-P) to produce N-acetylglucosamine-1-phosphate (GlcNAc-1-P), which is converted into UDP-GlcNAc by the transfer of uridine 5-monophosphate (from uridine 5-triphosphate), a reaction catalyzed by the N-terminal domain. The sequence is that of Bifunctional protein GlmU from Mycolicibacterium gilvum (strain PYR-GCK) (Mycobacterium gilvum (strain PYR-GCK)).